The primary structure comprises 1032 residues: MSQQGYVATPPYSQPQPGIGLSPPHYGHYGDPSHTASPTGMMKPAGPLGATATRGMLPPGPPPPGPHQFGQNGAHATGHPPQRFPGPPPVNNVASSHAPYQPSAQSSYPGPISTSSVTQLGSQLSAMQINSYGSGMAPPSQGPPGPLSATSLQTPPRPPQPSILQPGSQVLPPPPTTLNGPGASPLPLPMYRPDGLSGPPPPNAQYQPPPLPGQTLGAGYPPQQANSGPQMAGAQLSYPGGFPGGPAQMAGPPQPQKKLDPDSIPSPIQVIENDRASRGGQVYATNTRGQIPPLVTTDCMIQDQGNASPRFIRCTTYCFPCTSDMAKQAQIPLAAVIKPFATIPSNESPLYLVNHGESGPVRCNRCKAYMCPFMQFIEGGRRYQCGFCNCVNDVPPFYFQHLDHIGRRLDHYEKPELSLGSYEYVATLDYCRKSKPPNPPAFIFMIDVSYSNIKNGLVKLICEELKTMLEKIPKEEQEETSAIRVGFITYNKVLHFFNVKSNLAQPQMMVVTDVGEVFVPLLDGFLVNYQESQSVIHNLLDQIPDMFADSNENETVFAPVIQAGMEALKAADCPGKLFIFHSSLPTAEAPGKLKNRDDKKLVNTDKEKILFQPQTNVYDSLAKDCVAHGCSVTLFLFPSQYVDVASLGLVPQLTGGTLYKYNNFQMHLDRQQFLNDLRNDIEKKIGFDAIMRVRTSTGFRATDFFGGILMNNTTDVEMAAIDCDKAVTVEFKHDDKLSEDSGALIQCAVLYTTISGQRRLRIHNLGLNCSSQLADLYKSCETDALINFFAKSAFKAVLHQPLKVIREILVNQTAHMLACYRKNCASPSAASQLILPDSMKVLPVYMNCLLKNCVLLSRPEISTDERAYQRQLVMTMGVADSQLFFYPQLLPIHTLDVKSTMLPAAVRCSESRLSEEGIFLLANGLHMFLWLGVSSPPELIQGIFNVPSFAHINTDMTLLPEVGNPYSQQLRMIMGIIQQKRPYSMKLTIVKQREQPEMVFRQFLVEDKGLYGGSSYVDFLCCVHKEICQLLN.

A disordered region spans residues 1-260; that stretch reads MSQQGYVATP…GPPQPQKKLD (260 aa). Residues 102-133 show a composition bias toward polar residues; that stretch reads PSAQSSYPGPISTSSVTQLGSQLSAMQINSYG. Over residues 198–212 the composition is skewed to pro residues; it reads GPPPPNAQYQPPPLP. Ser266 is subject to Phosphoserine. Zn(2+) contacts are provided by Cys363, Cys366, Cys385, and Cys388. A zinc finger-like region spans residues 363–388; the sequence is CNRCKAYMCPFMQFIEGGRRYQCGFC. The Gelsolin-like repeat unit spans residues 901–974; that stretch reads MLPAAVRCSE…PYSQQLRMIM (74 aa).

This sequence belongs to the SEC23/SEC24 family. SEC24 subfamily. As to quaternary structure, COPII is composed of at least five proteins: the Sec23/24 complex, the Sec13/31 complex and Sar1. Interacts with TMED2 and TMED10. Interacts with CNIH4. Interacts with GOSR2 (via IxM motif) and STX5 (via IxM motif); recruits GOSR2 and STX5 into COPII-coated vesicles. Interacts with KCNA3; this interaction is reduced in the presence of KCNE4. Ubiquitously expressed, with higher amounts in placenta, pancreas, heart and liver.

Its subcellular location is the cytoplasmic vesicle. The protein localises to the COPII-coated vesicle membrane. The protein resides in the endoplasmic reticulum membrane. It is found in the cytoplasm. It localises to the cytosol. In terms of biological role, component of the coat protein complex II (COPII) which promotes the formation of transport vesicles from the endoplasmic reticulum (ER). The coat has two main functions, the physical deformation of the endoplasmic reticulum membrane into vesicles and the selection of cargo molecules for their transport to the Golgi complex. Plays a central role in cargo selection within the COPII complex and together with SEC24C may have a different specificity compared to SEC24A and SEC24B. May more specifically package GPI-anchored proteins through the cargo receptor TMED10. May also be specific for IxM motif-containing cargos like the SNAREs GOSR2 and STX5. This chain is Protein transport protein Sec24D, found in Homo sapiens (Human).